We begin with the raw amino-acid sequence, 330 residues long: Polyprenal reductase (330 aa).

The Cytoplasmic portion of the chain corresponds to 1–19 (MASWVGTELSALNPLRTLW). A helical membrane pass occupies residues 20–40 (LALAAAFLLALLLQLAPAGLL). Residues 41–74 (PNCALFQDLIRYGKTKLSGPRRPAVCRAFDVPKR) are Lumenal-facing. The helical transmembrane segment at 75–95 (YFSHFYVVSVLWNGFLLWFLS) threads the bilayer. The Cytoplasmic portion of the chain corresponds to 96-132 (RSLFLGAPFPNWLRALLRTLGSTQFRALEMESKASQM). Residues 133 to 153 (LVGELALSAFLVLVFLWVHSV) form a helical membrane-spanning segment. The Lumenal segment spans residues 154–168 (RRLFECFYISVFSNA). The helical transmembrane segment at 169–189 (VMHVVQYCFGLVYYVLVGLTV) threads the bilayer. Over 190–206 (LSQVPMDDKNVYMLGKN) the chain is Cytoplasmic. The chain crosses the membrane as a helical span at residues 207–227 (LLLPARWFHVLGMMMFLWSSA). Over 228–277 (HQYECHVILSNLRRNKKGAIVHCQHRIPFGDWFEYVSSANYLAELMIYIS) the chain is Lumenal. Residues 278–298 (MAVTFGFHNFTWWLVVAYVFF) form a helical membrane-spanning segment. At 299–330 (CQALSAFFNHKFYKSTFVSYPKHRKAFLPFLF) the chain is on the cytoplasmic side.

It belongs to the steroid 5-alpha reductase family. Polyprenal reductase subfamily.

The protein resides in the endoplasmic reticulum membrane. The catalysed reaction is a di-trans,poly-cis-dolichal + NADP(+) = a di-trans,poly-cis-polyprenal + NADPH + H(+). It catalyses the reaction a 3-oxo-5alpha-steroid + NADP(+) = a 3-oxo-Delta(4)-steroid + NADPH + H(+). It carries out the reaction androst-4-ene-3,17-dione + NADPH + H(+) = 5alpha-androstan-3,17-dione + NADP(+). The enzyme catalyses 17beta-hydroxy-5alpha-androstan-3-one + NADP(+) = testosterone + NADPH + H(+). The protein operates within protein modification; protein glycosylation. In terms of biological role, plays a key role in early steps of protein N-linked glycosylation by being involved in the conversion of polyprenol into dolichol. Acts as a polyprenal reductase that mediates the reduction of polyprenal into dolichal in a NADP-dependent mechanism. Dolichols are required for the synthesis of dolichol-linked monosaccharides and the oligosaccharide precursor used for N-glycosylation. Also able to convert testosterone (T) into 5-alpha-dihydrotestosterone (DHT). The chain is Polyprenal reductase from Mesocricetus auratus (Golden hamster).